The sequence spans 323 residues: Lipoyl synthase (323 aa).

[4Fe-4S] cluster contacts are provided by cysteine 65, cysteine 70, cysteine 76, cysteine 91, cysteine 95, cysteine 98, and serine 304. Positions 77 to 293 (FNNGTATFMI…KKEALSIGFT (217 aa)) constitute a Radical SAM core domain.

This sequence belongs to the radical SAM superfamily. Lipoyl synthase family. It depends on [4Fe-4S] cluster as a cofactor.

Its subcellular location is the cytoplasm. It catalyses the reaction [[Fe-S] cluster scaffold protein carrying a second [4Fe-4S](2+) cluster] + N(6)-octanoyl-L-lysyl-[protein] + 2 oxidized [2Fe-2S]-[ferredoxin] + 2 S-adenosyl-L-methionine + 4 H(+) = [[Fe-S] cluster scaffold protein] + N(6)-[(R)-dihydrolipoyl]-L-lysyl-[protein] + 4 Fe(3+) + 2 hydrogen sulfide + 2 5'-deoxyadenosine + 2 L-methionine + 2 reduced [2Fe-2S]-[ferredoxin]. The protein operates within protein modification; protein lipoylation via endogenous pathway; protein N(6)-(lipoyl)lysine from octanoyl-[acyl-carrier-protein]: step 2/2. In terms of biological role, catalyzes the radical-mediated insertion of two sulfur atoms into the C-6 and C-8 positions of the octanoyl moiety bound to the lipoyl domains of lipoate-dependent enzymes, thereby converting the octanoylated domains into lipoylated derivatives. This Buchnera aphidicola subsp. Acyrthosiphon pisum (strain 5A) protein is Lipoyl synthase.